The chain runs to 269 residues: 5'-nucleotidase SurE (269 aa).

Residues D11, D12, S43, and N101 each coordinate a divalent metal cation.

This sequence belongs to the SurE nucleotidase family. It depends on a divalent metal cation as a cofactor.

It localises to the cytoplasm. It carries out the reaction a ribonucleoside 5'-phosphate + H2O = a ribonucleoside + phosphate. Nucleotidase that shows phosphatase activity on nucleoside 5'-monophosphates. The chain is 5'-nucleotidase SurE from Prochlorococcus marinus (strain MIT 9313).